Consider the following 469-residue polypeptide: Alpha-galactosidase (469 aa).

The first 17 residues, 1–17 (MFPFFFALFFSSTDVLA), serve as a signal peptide directing secretion. An intrachain disulfide couples C41 to C73. Residues D71 and D72 each contribute to the substrate site. N81 carries an N-linked (GlcNAc...) asparagine glycan. The cysteines at positions 120 and 150 are disulfide-linked. Residue K146 participates in substrate binding. D148 serves as the catalytic Nucleophile. N174 is a glycosylation site (N-linked (GlcNAc...) asparagine). R204 serves as a coordination point for substrate. Catalysis depends on D208, which acts as the Proton donor. 2 disulfides stabilise this stretch: C220–C236 and C222–C229. Q250 contributes to the substrate binding site. 7 N-linked (GlcNAc...) asparagine glycosylation sites follow: N269, N369, N402, N412, N421, N426, and N434.

The protein belongs to the glycosyl hydrolase 27 family. In terms of assembly, homotetramer.

It localises to the secreted. It catalyses the reaction Hydrolysis of terminal, non-reducing alpha-D-galactose residues in alpha-D-galactosides, including galactose oligosaccharides, galactomannans and galactolipids.. The chain is Alpha-galactosidase (MEL) from Lachancea cidri (Yeast).